The chain runs to 782 residues: General transcription and DNA repair factor IIH helicase/translocase subunit XPB (782 aa).

Basic and acidic residues predominate over residues 1–11 (MGKRDRADREK). The interval 1-51 (MGKRDRADREKKKSKKRHYEDEEDEEDDAPGNDTQEAVPSAAGKQVDESGT) is disordered. The Nuclear localization signal motif lies at 6-18 (RADREKKKSKKRH). The segment covering 21 to 30 (DEEDEEDDAP) has biased composition (acidic residues). Residues 327 to 488 (MFGNGRARSG…DLNFLIGPKL (162 aa)) enclose the Helicase ATP-binding domain. 340–347 (LPCGAGKS) is a binding site for ATP. The short motif at 441–444 (DEVH) is the DEVH box element. In terms of domain architecture, Helicase C-terminal spans 542-702 (RACQFLIKFH…LAGMEEEDLA (161 aa)). Ser-686 carries the phosphoserine modification. Ser-751 is subject to Phosphoserine; by CK2.

Belongs to the helicase family. RAD25/XPB subfamily. In terms of assembly, component of the 7-subunit TFIIH core complex composed of XPB/ERCC3, XPD/ERCC2, GTF2H1, GTF2H2, GTF2H3, GTF2H4 and GTF2H5, which is active in NER. The core complex associates with the 3-subunit CDK-activating kinase (CAK) module composed of CCNH/cyclin H, CDK7 and MNAT1 to form the 10-subunit holoenzyme (holo-TFIIH) active in transcription. Interacts with PUF60. Interacts with ATF7IP. Interacts with KAT2A; leading to KAT2A recruitment to promoters and acetylation of histones. Part of TBP-based Pol II pre-initiation complex (PIC), in which Pol II core assembles with general transcription factors and other specific initiation factors including GTF2E1, GTF2E2, GTF2F1, GTF2F2, TCEA1, ERCC2, ERCC3, GTF2H2, GTF2H3, GTF2H4, GTF2H5, GTF2A1, GTF2A2, GTF2B and TBP; this large multi-subunit PIC complex mediates DNA unwinding and targets Pol II core to the transcription start site where the first phosphodiester bond forms. In terms of processing, phosphorylation on Ser-751 by CK2 controls the 5'-excision activity of ERCC1-XPF endonuclease; phosphorylated protein inhibits the excision activity and thus NER. Dephosphorylation reactivates the 5'-excision step. Phosphorylation has no effect on transcription or the 3'-5' helicase activity.

The protein resides in the nucleus. The enzyme catalyses Couples ATP hydrolysis with the unwinding of duplex DNA by translocating in the 3'-5' direction.. It catalyses the reaction ATP + H2O = ADP + phosphate + H(+). With respect to regulation, phosphorylation on Ser-751 by CK2 controls the 5'-excision activity of ERCC1-XPF endonuclease; phosphorylated protein inhibits the excision activity and thus NER. ATPase activity is stimulated by TFIIH subunit p52 (GTF2H4). DNA translocase activity by this subunit in TFIIH is stimulated by XPA, ERCC5/XPG and XFP plus ERCC1. Functionally, ATP-dependent 3'-5' DNA helicase/translocase; binds dsDNA rather than ssDNA, unzipping it in a translocase rather than classical helicase activity. Component of the general transcription and DNA repair factor IIH (TFIIH) core complex. When complexed to CDK-activating kinase (CAK), involved in RNA transcription by RNA polymerase II. The ATPase activity of XPB/ERCC3, but not its helicase activity, is required for DNA opening; it may wrap around the damaged DNA wedging it open, causing localized melting and twisting that allows XPD/ERCC2 helicase to anchor. The ATP-dependent helicase activity of XPB/ERCC3 may be required for promoter escape. Also involved in transcription-coupled nucleotide excision repair (NER) of damaged DNA. In NER, TFIIH acts by opening DNA around the lesion to allow the excision of the damaged oligonucleotide and its replacement by a new DNA fragment. The structure of the TFIIH transcription complex differs from the NER-TFIIH complex; large movements by XPD/ERCC2 and XPB/ERCC3 are stabilized by XPA. The protein is General transcription and DNA repair factor IIH helicase/translocase subunit XPB (ERCC3) of Bos taurus (Bovine).